A 115-amino-acid chain; its full sequence is Protein V2 (115 aa).

The protein belongs to the geminiviridae protein AV2/V2 family. In terms of assembly, interacts with host SGS3.

The protein localises to the host cytoplasm. The protein resides in the host perinuclear region. Through its interaction with host SGS3, acts as a suppressor of RNA-mediated gene silencing, also known as post-transcriptional gene silencing (PTGS), a mechanism of plant viral defense that limits the accumulation of viral RNAs. In Tomato yellow leaf curl China virus (TYLCCNV), this protein is Protein V2.